A 481-amino-acid polypeptide reads, in one-letter code: Proline--tRNA ligase (481 aa).

Belongs to the class-II aminoacyl-tRNA synthetase family. ProS type 3 subfamily. In terms of assembly, homodimer.

It localises to the cytoplasm. It catalyses the reaction tRNA(Pro) + L-proline + ATP = L-prolyl-tRNA(Pro) + AMP + diphosphate. In terms of biological role, catalyzes the attachment of proline to tRNA(Pro) in a two-step reaction: proline is first activated by ATP to form Pro-AMP and then transferred to the acceptor end of tRNA(Pro). The protein is Proline--tRNA ligase of Chlorobium phaeovibrioides (strain DSM 265 / 1930) (Prosthecochloris vibrioformis (strain DSM 265)).